Here is an 88-residue protein sequence, read N- to C-terminus: HssA/B-like protein 19 (88 aa).

Belongs to the hssA/B family.

This chain is HssA/B-like protein 19 (hssl19), found in Dictyostelium discoideum (Social amoeba).